The sequence spans 299 residues: Acidic endochitinase Pun g 14, amyloplastic (299 aa).

The transit peptide at 1–26 (MAKTLPFSRALLLSLSILLVARAISA) directs the protein to the amyloplast. The GH18 domain occupies 27–299 (GDIAIYWGQN…TYSTTIKDQV (273 aa)). 2 disulfides stabilise this stretch: C46–C93 and C76–C83. E153 acts as the Proton donor in catalysis. Residues C185 and C216 are joined by a disulfide bond.

The protein belongs to the glycosyl hydrolase 18 family. Chitinase class III subfamily. Monomer. In terms of tissue distribution, highly expressed in seeds and to a lesser extent in the skin of the pomegranate fruit (at protein level). Not expressed in leaves or flesh of the fruit (at protein level).

It localises to the plastid. The protein resides in the amyloplast. The catalysed reaction is Random endo-hydrolysis of N-acetyl-beta-D-glucosaminide (1-&gt;4)-beta-linkages in chitin and chitodextrins.. With respect to regulation, activity is not affected by addition of 10 mM Ca(2+) or removal of Ca(2+). Functionally, hydrolyzes chitin. Probable calcium storage protein of the seeds. Binds calcium ions with high capacity and low affinity. Involved in seed germination. The sequence is that of Acidic endochitinase Pun g 14, amyloplastic from Punica granatum (Pomegranate).